A 241-amino-acid polypeptide reads, in one-letter code: Carboxy-S-adenosyl-L-methionine synthase (241 aa).

S-adenosyl-L-methionine contacts are provided by residues Tyr-38, 63–65 (GCS), 88–89 (DN), 116–117 (DI), Asn-131, and Arg-198.

It belongs to the class I-like SAM-binding methyltransferase superfamily. Cx-SAM synthase family. Homodimer.

It carries out the reaction prephenate + S-adenosyl-L-methionine = carboxy-S-adenosyl-L-methionine + 3-phenylpyruvate + H2O. Catalyzes the conversion of S-adenosyl-L-methionine (SAM) to carboxy-S-adenosyl-L-methionine (Cx-SAM). This Mannheimia succiniciproducens (strain KCTC 0769BP / MBEL55E) protein is Carboxy-S-adenosyl-L-methionine synthase.